The primary structure comprises 370 residues: Protein-tyrosine sulfotransferase 1 (370 aa).

The Cytoplasmic portion of the chain corresponds to 1-8 (MVGKLKQN). Residues 9 to 25 (LLLACLVISSVTVFYLG) traverse the membrane as a helical; Signal-anchor for type II membrane protein segment. The Lumenal portion of the chain corresponds to 26-370 (QHAMECHHRI…KEKPQTEQVE (345 aa)). Asn60 carries an N-linked (GlcNAc...) asparagine glycan. Position 79 to 83 (79 to 83 (RSGTT)) interacts with 3'-phosphoadenylyl sulfate. Cysteines 97 and 157 form a disulfide. Glu100 functions as the Proton donor/acceptor in the catalytic mechanism. Positions 102–106 (RVIPR) are interaction with peptide substrate. Residues Arg184, Ser192, and Arg196 each contribute to the 3'-phosphoadenylyl sulfate site. A disulfide bridge connects residues Cys226 and Cys234. Tyr239 provides a ligand contact to 3'-phosphoadenylyl sulfate. The N-linked (GlcNAc...) asparagine glycan is linked to Asn262. Residues 286–295 (STDQVIKPVN) and Lys301 each bind 3'-phosphoadenylyl sulfate.

Belongs to the protein sulfotransferase family. Homodimer. Can also form heterodimers with TPST2. Post-translationally, N-glycosylated. Ubiquitous. Detected in heart, brain, lung, liver, spleen, kidney, skeletal muscle and testis.

Its subcellular location is the golgi apparatus membrane. It carries out the reaction L-tyrosyl-[protein] + 3'-phosphoadenylyl sulfate = O-sulfo-L-tyrosine-[protein] + adenosine 3',5'-bisphosphate + H(+). Functionally, catalyzes the O-sulfation of tyrosine residues within acidic motifs of polypeptides, using 3'-phosphoadenylyl sulfate (PAPS) as cosubstrate. The protein is Protein-tyrosine sulfotransferase 1 (Tpst1) of Mus musculus (Mouse).